A 698-amino-acid polypeptide reads, in one-letter code: SPX domain-containing membrane protein OsI_21475 (698 aa).

Residues V2 to T145 form the SPX domain. The next 6 membrane-spanning stretches (helical) occupy residues F248–I268, L279–F299, L316–M336, L339–V357, A376–L396, and L412–F432. Positions L467–P495 are disordered. Residues E476–E486 show a composition bias toward acidic residues. A run of 5 helical transmembrane segments spans residues L514–I534, A545–G565, L577–S597, V605–L625, and L671–F691.

This sequence belongs to the major facilitator superfamily.

The protein resides in the membrane. This is SPX domain-containing membrane protein OsI_21475 from Oryza sativa subsp. indica (Rice).